A 255-amino-acid chain; its full sequence is Imidazole glycerol phosphate synthase subunit HisF (255 aa).

Catalysis depends on residues Asp-12 and Asp-131.

This sequence belongs to the HisA/HisF family. Heterodimer of HisH and HisF.

It is found in the cytoplasm. It catalyses the reaction 5-[(5-phospho-1-deoxy-D-ribulos-1-ylimino)methylamino]-1-(5-phospho-beta-D-ribosyl)imidazole-4-carboxamide + L-glutamine = D-erythro-1-(imidazol-4-yl)glycerol 3-phosphate + 5-amino-1-(5-phospho-beta-D-ribosyl)imidazole-4-carboxamide + L-glutamate + H(+). It functions in the pathway amino-acid biosynthesis; L-histidine biosynthesis; L-histidine from 5-phospho-alpha-D-ribose 1-diphosphate: step 5/9. In terms of biological role, IGPS catalyzes the conversion of PRFAR and glutamine to IGP, AICAR and glutamate. The HisF subunit catalyzes the cyclization activity that produces IGP and AICAR from PRFAR using the ammonia provided by the HisH subunit. The protein is Imidazole glycerol phosphate synthase subunit HisF of Ruthia magnifica subsp. Calyptogena magnifica.